The primary structure comprises 1669 residues: Polycomb group protein Asx (1669 aa).

Residues 90–109 form a disordered region; that stretch reads IPPEKKPMAPSEEAAVSTAP. The 124-residue stretch at 215 to 338 folds into the DEUBAD domain; the sequence is PDSILASTNL…FEPFWGEKNS (124 aa). 2 consecutive short sequence motifs (LXXLL motif) follow at residues 224–228 and 244–248; these read LRALL and LIQLL. The short motif at 283 to 285 is the NEF motif element; sequence NEF. Residues 336–352 are compositionally biased toward basic and acidic residues; the sequence is KNSRGKDKDKLESDCKN. Disordered regions lie at residues 336-378, 410-478, 635-718, 952-972, 1174-1193, 1398-1437, 1482-1505, and 1587-1610; these read KNSR…QQAT, SSTF…IVPN, FFTS…SAGA, MPHQ…QQQR, QQQS…QQQL, PGPG…PEQL, LHSI…TAGS, and SPTA…QHQH. Polar residues-rich tracts occupy residues 367-378, 413-425, and 434-450; these read ATSQQKPLQQAT, FPPT…VLNE, and PSSS…TIAT. The segment covering 465–474 has biased composition (basic and acidic residues); sequence KDSKQPKMDE. The span at 635–650 shows a compositional bias: low complexity; that stretch reads FFTSSSSSNTATTAAN. The segment covering 651–661 has biased composition (basic and acidic residues); the sequence is KLEEHSDKPED. Residues 666–718 show a composition bias toward low complexity; the sequence is IASSISGSTPASSITSTSCTSSSSSSASMSSSCSSSNSGSTTTAPTTSSSAGA. Low complexity-rich tracts occupy residues 1174-1192 and 1404-1436; these read QQQS…QQQQ and TATA…APEQ. Positions 1592-1610 are enriched in low complexity; sequence PSPINQQPQSQPTGTQHQH. A PHD-type; atypical zinc finger spans residues 1602-1666; sequence QPTGTQHQHP…IGAAKLCVAC (65 aa).

It belongs to the Asx family. As to quaternary structure, component of the polycomb repressive deubiquitinase (PR-DUB) complex, at least composed of caly/calypso, Asx and sba (MBD5/6 homolog). Interacts (via DEUBAD domain) with caly/calypso (via ULD domain); the interaction produces a stable heterodimer with a composite binding site for ubiquitin. Two copies of the caly-Asx heterodimer assemble into a bidentate tetramer. Interacts (via PHD domain) with sba (probably via MBD domain); the interaction is important for the stability of the PR-DUB complex. Interacts with tant. Interacts with cyclin CycG. As to expression, highly expressed in nurse cells and deposited in oocytes late in oogenesis. Ubiquitous in early embryos. Late embryos show higher levels in CNS and neurectoderm.

Its subcellular location is the nucleus. It localises to the chromosome. Non-catalytic component of the polycomb repressive deubiquitinase (PR-DUB) complex, a complex that specifically mediates deubiquitination of histone H2A monoubiquitinated at 'Lys-119' (H2AK118ub1). Activator of the PR-DUB complex involved in ubiquitin binding and allosteric activation of calypso deubiquitinase activity. PR-DUB does not deubiquitinate monoubiquitinated histone H2B. PR-DUB is required to maintain the transcriptionally repressive state of homeotic genes throughout development. The PR-DUB complex has weak or no activity toward 'Lys-48'- and 'Lys-63'-linked polyubiquitin chains. Atypical Polycomb group protein, which may be involved in both Polycomb group (PcG) and trithorax group (trxG) complexes. PcG and trxG proteins act by forming multiprotein complexes, which are respectively required to maintain the transcriptionally repressive and transcriptionally active state of homeotic genes throughout development. PcG and trxG protein complexes are not required to initiate repression and activation, but to maintain it during later stages of development. The polypeptide is Polycomb group protein Asx (Drosophila melanogaster (Fruit fly)).